A 620-amino-acid chain; its full sequence is Glutathione-regulated potassium-efflux system protein KefC (620 aa).

Topologically, residues 1–3 (MDS) are periplasmic. The chain crosses the membrane as a helical span at residues 4–24 (HTLVQALIYLGSAALIVPIAV). Residue arginine 25 is a topological domain, cytoplasmic. Residues 26–46 (LGLGSVLGYLIAGCIIGPWGL) form a helical membrane-spanning segment. Residues 47-53 (RLVTDAE) are Periplasmic-facing. The chain crosses the membrane as a helical span at residues 54–74 (SILHFAEIGVVLMLFIIGLEL). The Cytoplasmic segment spans residues 75-89 (DPQRLWKLRAAVFGG). Residues 90–110 (GALQMVICGGLLGLFCMLLGL) form a helical membrane-spanning segment. Over 111–113 (RWQ) the chain is Periplasmic. The chain crosses the membrane as a helical span at residues 114–134 (VAELIGMTLALSSTAIAMQAM). At 135–148 (NERNLMVTQMGRSA) the chain is on the cytoplasmic side. A helical membrane pass occupies residues 149–169 (FAVLLFQDIAAIPLVAMIPLL). Over 170–177 (AASSASTT) the chain is Periplasmic. A helical transmembrane segment spans residues 178 to 198 (MGAFALSALKVAGALVLVVLL). The Cytoplasmic portion of the chain corresponds to 199–213 (GRYVTRPALRFVARS). A helical membrane pass occupies residues 214–233 (GLREVFSAVALFLVFGFGLL). The Periplasmic portion of the chain corresponds to 234 to 236 (LEE). The chain crosses the membrane as a helical span at residues 237 to 254 (VGLSMAMGAFLAGVLLAS). Over 255 to 269 (SEYRHALESDIEPFK) the chain is Cytoplasmic. The helical transmembrane segment at 270–290 (GLLLGLFFIGVGMSIDFGTLI) threads the bilayer. The Periplasmic segment spans residues 291 to 293 (ENP). Residues 294 to 314 (LRIVILLLGFLIIKIAMLWLI) form a helical membrane-spanning segment. Over 315 to 326 (ARPLQVPNKQRR) the chain is Cytoplasmic. Residues 327–347 (WFAVLLGQGSEFAFVVFGAAQ) traverse the membrane as a helical segment. Residues 348–358 (MANVLEPEWAK) lie on the Periplasmic side of the membrane. A helical transmembrane segment spans residues 359 to 379 (SLTLAVALSMAATPILLVILN). Topologically, residues 380 to 620 (RLEQSSTEEA…ADEPETKPSS (241 aa)) are cytoplasmic. The RCK N-terminal domain occupies 399–518 (QPRVIIAGFG…AGVEKPERET (120 aa)). Positions 597-620 (GWQGTEEGKHTGNMADEPETKPSS) are disordered.

It belongs to the monovalent cation:proton antiporter 2 (CPA2) transporter (TC 2.A.37) family. KefC subfamily. Homodimer. Interacts with the regulatory subunit KefF.

The protein resides in the cell inner membrane. Functionally, pore-forming subunit of a potassium efflux system that confers protection against electrophiles. Catalyzes K(+)/H(+) antiport. The sequence is that of Glutathione-regulated potassium-efflux system protein KefC from Escherichia coli O157:H7.